Consider the following 246-residue polypeptide: Probable transcriptional regulatory protein HD_0596 (246 aa).

It belongs to the TACO1 family.

It localises to the cytoplasm. This is Probable transcriptional regulatory protein HD_0596 from Haemophilus ducreyi (strain 35000HP / ATCC 700724).